The sequence spans 349 residues: D-alanine--D-alanine ligase (349 aa).

In terms of domain architecture, ATP-grasp spans 132–335; that stretch reads KHVFEAVGVP…YSDLIEKLVD (204 aa). 162–217 is a binding site for ATP; sequence VEKLDFPVFVKPANMGSSVGISKVDDLADLQPALSEAYKYDNRVVIEQGVDAREIE. Asp289, Glu302, and Asn304 together coordinate Mg(2+).

It belongs to the D-alanine--D-alanine ligase family. Requires Mg(2+) as cofactor. Mn(2+) serves as cofactor.

The protein resides in the cytoplasm. It catalyses the reaction 2 D-alanine + ATP = D-alanyl-D-alanine + ADP + phosphate + H(+). It functions in the pathway cell wall biogenesis; peptidoglycan biosynthesis. Its function is as follows. Cell wall formation. The polypeptide is D-alanine--D-alanine ligase (Lactococcus lactis subsp. cremoris (strain MG1363)).